The primary structure comprises 371 residues: Putative glutamate--cysteine ligase 2 (371 aa).

The protein belongs to the glutamate--cysteine ligase type 2 family. YbdK subfamily.

The catalysed reaction is L-cysteine + L-glutamate + ATP = gamma-L-glutamyl-L-cysteine + ADP + phosphate + H(+). In terms of biological role, ATP-dependent carboxylate-amine ligase which exhibits weak glutamate--cysteine ligase activity. The polypeptide is Putative glutamate--cysteine ligase 2 (Cupriavidus necator (strain ATCC 17699 / DSM 428 / KCTC 22496 / NCIMB 10442 / H16 / Stanier 337) (Ralstonia eutropha)).